Consider the following 410-residue polypeptide: LL-diaminopimelate aminotransferase (410 aa).

Residues tyrosine 15 and glycine 42 each contribute to the substrate site. Residues tyrosine 72, 108-109 (SK), tyrosine 132, asparagine 187, tyrosine 218, and 246-248 (SFS) contribute to the pyridoxal 5'-phosphate site. The substrate site is built by lysine 109, tyrosine 132, and asparagine 187. Lysine 249 carries the N6-(pyridoxal phosphate)lysine modification. Arginine 257 and asparagine 292 together coordinate pyridoxal 5'-phosphate. Residues asparagine 292 and arginine 388 each coordinate substrate.

Belongs to the class-I pyridoxal-phosphate-dependent aminotransferase family. LL-diaminopimelate aminotransferase subfamily. Homodimer. Requires pyridoxal 5'-phosphate as cofactor.

The enzyme catalyses (2S,6S)-2,6-diaminopimelate + 2-oxoglutarate = (S)-2,3,4,5-tetrahydrodipicolinate + L-glutamate + H2O + H(+). It participates in amino-acid biosynthesis; L-lysine biosynthesis via DAP pathway; LL-2,6-diaminopimelate from (S)-tetrahydrodipicolinate (aminotransferase route): step 1/1. Functionally, involved in the synthesis of meso-diaminopimelate (m-DAP or DL-DAP), required for both lysine and peptidoglycan biosynthesis. Catalyzes the direct conversion of tetrahydrodipicolinate to LL-diaminopimelate. The chain is LL-diaminopimelate aminotransferase from Geotalea uraniireducens (strain Rf4) (Geobacter uraniireducens).